Reading from the N-terminus, the 334-residue chain is Glycerol-3-phosphate dehydrogenase [NAD(P)+] (334 aa).

The NADPH site is built by S13, F14, and K108. Sn-glycerol 3-phosphate-binding residues include K108, G137, and T139. Residue A141 coordinates NADPH. K193, D246, S256, R257, and N258 together coordinate sn-glycerol 3-phosphate. K193 serves as the catalytic Proton acceptor. R257 serves as a coordination point for NADPH. NADPH contacts are provided by V281 and E283.

The protein belongs to the NAD-dependent glycerol-3-phosphate dehydrogenase family.

Its subcellular location is the cytoplasm. It carries out the reaction sn-glycerol 3-phosphate + NAD(+) = dihydroxyacetone phosphate + NADH + H(+). The catalysed reaction is sn-glycerol 3-phosphate + NADP(+) = dihydroxyacetone phosphate + NADPH + H(+). It functions in the pathway membrane lipid metabolism; glycerophospholipid metabolism. Its function is as follows. Catalyzes the reduction of the glycolytic intermediate dihydroxyacetone phosphate (DHAP) to sn-glycerol 3-phosphate (G3P), the key precursor for phospholipid synthesis. This chain is Glycerol-3-phosphate dehydrogenase [NAD(P)+], found in Bartonella tribocorum (strain CIP 105476 / IBS 506).